The primary structure comprises 790 residues: Penicillin-binding protein 1A (790 aa).

Residues 1–6 (MYKSLL) are Cytoplasmic-facing. A helical; Signal-anchor for type II membrane protein transmembrane segment spans residues 7 to 27 (FCLKIFVFLILVGCGITAYII). At 28–790 (YHYSRDLPDY…SKEDQSQEIY (763 aa)) the chain is on the periplasmic side. Positions 49-220 (TRIYSRDGKL…SELNPERNYA (172 aa)) are transglycosylase. Glu87 serves as the catalytic Proton donor; for transglycosylase activity. The transpeptidase stretch occupies residues 398–711 (DVIVVEAIKE…SNVVLPIFID (314 aa)). Catalysis depends on Ser457, which acts as the Acyl-ester intermediate; for transpeptidase activity.

It in the N-terminal section; belongs to the glycosyltransferase 51 family. The protein in the C-terminal section; belongs to the transpeptidase family.

It is found in the cell inner membrane. The enzyme catalyses [GlcNAc-(1-&gt;4)-Mur2Ac(oyl-L-Ala-gamma-D-Glu-L-Lys-D-Ala-D-Ala)](n)-di-trans,octa-cis-undecaprenyl diphosphate + beta-D-GlcNAc-(1-&gt;4)-Mur2Ac(oyl-L-Ala-gamma-D-Glu-L-Lys-D-Ala-D-Ala)-di-trans,octa-cis-undecaprenyl diphosphate = [GlcNAc-(1-&gt;4)-Mur2Ac(oyl-L-Ala-gamma-D-Glu-L-Lys-D-Ala-D-Ala)](n+1)-di-trans,octa-cis-undecaprenyl diphosphate + di-trans,octa-cis-undecaprenyl diphosphate + H(+). It catalyses the reaction Preferential cleavage: (Ac)2-L-Lys-D-Ala-|-D-Ala. Also transpeptidation of peptidyl-alanyl moieties that are N-acyl substituents of D-alanine.. The protein operates within cell wall biogenesis; peptidoglycan biosynthesis. Cell wall formation. Synthesis of cross-linked peptidoglycan from the lipid intermediates. The enzyme has a penicillin-insensitive transglycosylase N-terminal domain (formation of linear glycan strands) and a penicillin-sensitive transpeptidase C-terminal domain (cross-linking of the peptide subunits). This Rickettsia conorii (strain ATCC VR-613 / Malish 7) protein is Penicillin-binding protein 1A (mrcA).